Reading from the N-terminus, the 30-residue chain is Thaumatin-like protein (30 aa).

The protein belongs to the thaumatin family.

It is found in the secreted. In terms of biological role, has antifungal activity against C.comatus, F.oxysporum and P.ostreatus. The polypeptide is Thaumatin-like protein (Phaseolus vulgaris (Kidney bean)).